A 433-amino-acid chain; its full sequence is Bifunctional protein GlmU (433 aa).

The pyrophosphorylase stretch occupies residues 1 to 226 (MLSVIILAAG…EECFLGVNSQ (226 aa)). Residues 7–10 (LAAG), K21, and 80–81 (GT) each bind UDP-N-acetyl-alpha-D-glucosamine. D106 lines the Mg(2+) pocket. UDP-N-acetyl-alpha-D-glucosamine is bound by residues G138, E152, N167, and N224. N224 contacts Mg(2+). Residues 227–247 (TERAKAEEIMLERLRKNAMDL) are linker. The tract at residues 248-433 (GVVMQLPSSI…NGYFKFFKKP (186 aa)) is N-acetyltransferase. UDP-N-acetyl-alpha-D-glucosamine is bound by residues R311 and K328. H339 acts as the Proton acceptor in catalysis. UDP-N-acetyl-alpha-D-glucosamine contacts are provided by Y342 and N353. Acetyl-CoA-binding positions include A356, 362–363 (NY), S381, S399, and R416.

It in the N-terminal section; belongs to the N-acetylglucosamine-1-phosphate uridyltransferase family. The protein in the C-terminal section; belongs to the transferase hexapeptide repeat family. Homotrimer. Requires Mg(2+) as cofactor.

It localises to the cytoplasm. It catalyses the reaction alpha-D-glucosamine 1-phosphate + acetyl-CoA = N-acetyl-alpha-D-glucosamine 1-phosphate + CoA + H(+). The catalysed reaction is N-acetyl-alpha-D-glucosamine 1-phosphate + UTP + H(+) = UDP-N-acetyl-alpha-D-glucosamine + diphosphate. Its pathway is nucleotide-sugar biosynthesis; UDP-N-acetyl-alpha-D-glucosamine biosynthesis; N-acetyl-alpha-D-glucosamine 1-phosphate from alpha-D-glucosamine 6-phosphate (route II): step 2/2. It functions in the pathway nucleotide-sugar biosynthesis; UDP-N-acetyl-alpha-D-glucosamine biosynthesis; UDP-N-acetyl-alpha-D-glucosamine from N-acetyl-alpha-D-glucosamine 1-phosphate: step 1/1. The protein operates within bacterial outer membrane biogenesis; LPS lipid A biosynthesis. Functionally, catalyzes the last two sequential reactions in the de novo biosynthetic pathway for UDP-N-acetylglucosamine (UDP-GlcNAc). The C-terminal domain catalyzes the transfer of acetyl group from acetyl coenzyme A to glucosamine-1-phosphate (GlcN-1-P) to produce N-acetylglucosamine-1-phosphate (GlcNAc-1-P), which is converted into UDP-GlcNAc by the transfer of uridine 5-monophosphate (from uridine 5-triphosphate), a reaction catalyzed by the N-terminal domain. This is Bifunctional protein GlmU from Helicobacter pylori (strain HPAG1).